Reading from the N-terminus, the 515-residue chain is ATP synthase subunit alpha (515 aa).

An ATP-binding site is contributed by 171–178 (GDRQTGKT).

Belongs to the ATPase alpha/beta chains family. F-type ATPases have 2 components, CF(1) - the catalytic core - and CF(0) - the membrane proton channel. CF(1) has five subunits: alpha(3), beta(3), gamma(1), delta(1), epsilon(1). CF(0) has three main subunits: a(1), b(2) and c(9-12). The alpha and beta chains form an alternating ring which encloses part of the gamma chain. CF(1) is attached to CF(0) by a central stalk formed by the gamma and epsilon chains, while a peripheral stalk is formed by the delta and b chains.

The protein resides in the cell inner membrane. The catalysed reaction is ATP + H2O + 4 H(+)(in) = ADP + phosphate + 5 H(+)(out). Functionally, produces ATP from ADP in the presence of a proton gradient across the membrane. The alpha chain is a regulatory subunit. The protein is ATP synthase subunit alpha of Xylella fastidiosa (strain 9a5c).